The chain runs to 249 residues: Vesicle-associated membrane protein-associated protein A (249 aa).

Ala2 is subject to N-acetylalanine. The Cytoplasmic portion of the chain corresponds to 2–227 (ASASGAMAKH…VSFRDNVTSP (226 aa)). The MSP domain maps to 14 to 131 (ILVLDPPSDL…MDSKLRCVFE (118 aa)). A phosphorylated FFAT motif binding region spans residues 50–53 (KVKT). The residue at position 125 (Lys125) is an N6-acetyllysine. A compositionally biased stretch (basic and acidic residues) spans 135-144 (ENDKLNDMEP). Residues 135 to 166 (ENDKLNDMEPSKAVPLNASKQDGPLPKPHSVS) form a disordered region. Ser166 carries the post-translational modification Phosphoserine. Residues 168–207 (NDTETRKLMEECKRLQGEMMKLSEENRHLRDEGLRLRKVA) adopt a coiled-coil conformation. At Thr170 the chain carries Phosphothreonine. Residues Ser214, Ser216, and Ser219 each carry the phosphoserine modification. Residues 228-248 (LPSLLVVIAAIFIGFFLGKFI) traverse the membrane as a helical; Anchor for type IV membrane protein segment.

Belongs to the VAMP-associated protein (VAP) (TC 9.B.17) family. Homodimer; disulfide-linked. Heterodimer with VAPB. Interacts with VAMP1, VAMP2, STX1A, BET1, SEC22C and with the C-terminal domain of OCLN. Interacts (via MSP domain) with OSBPL1A (via FFAT motif). Interacts (via MSP domain) with ZFYVE27; may retain ZFYVE27 in the endoplasmic reticulum and regulate its function in cell projections formation. Interacts with OSBP. Interacts (via C-terminus) with RSAD2/viperin (via C-terminus). Interacts with IFITM3. Interacts with OSBPL3 (phosphorylated form). Interacts with KIF5A in a ZFYVE27-dependent manner. Interacts (via MSP domain) with STARD3 (via phosphorylated FFAT motif); this interaction recruits VAPA to the endosome. Interacts with STARD3NL (via FFAT motif). Interacts with CERT1. Interacts with PLEKHA3 and SACM1L to form a ternary complex. Interacts with VPS13A (via FFAT motif). Interacts with RB1CC1 (via phosphorylated FFAT motif), MIGA2 (via phosphorylated FFAT motif), RMDN3 (via phosphorylated FFAT motif), KCNB1 (via phosphorylated FFAT motif) and KCNB2 (via phosphorylated FFAT motif). Interacts (via MSP domain) with WDR44; the interactions connect the endoplasmic reticulum (ER) with the endosomal tubule. Ubiquitous.

Its subcellular location is the endoplasmic reticulum membrane. It localises to the cell membrane. The protein localises to the cell junction. It is found in the tight junction. The protein resides in the nucleus membrane. In terms of biological role, endoplasmic reticulum (ER)-anchored protein that mediates the formation of contact sites between the ER and endosomes via interaction with FFAT motif-containing proteins such as STARD3 or WDR44. STARD3-VAPA interaction enables cholesterol transfer from the ER to endosomes. Via interaction with WDR44 participates in neosynthesized protein export. In addition, recruited to the plasma membrane through OSBPL3 binding. The OSBPL3-VAPA complex stimulates RRAS signaling which in turn attenuates integrin beta-1 (ITGB1) activation at the cell surface. With OSBPL3, may regulate ER morphology. May play a role in vesicle trafficking. The polypeptide is Vesicle-associated membrane protein-associated protein A (Rattus norvegicus (Rat)).